The chain runs to 424 residues: MFLLPRFVLVSCIIGSLGFDNPPTNVVSHLNGDWFLFGDSRSDCNHVVTTNPRNYSYMDLNPALCGSGKISSKAGNSIFRSFHFTDFYNYTGEGQQIIFYEGVNFTPYHAFKCTTSGSNDIWMQNKGLFYTQVYKNMAVYRSLTFVNVPYVYNGSAQSTALCKSGSLVLNNPAYIAREANFGDYYYKVEADFYLSGCDEYIVPLCIFNGKFLSNTKYYDDSQYYFNKDTGVIYGLNSTETITTGFDFNCHYLVLPSGNYLAISNELLLTVPTKAICLNKRKDFTPVQVVDSRWNNARQSDNMTAVACQPPYCYFRNSTTNYVGVYDINHGDAGFTSILSGLLYDSPCFSQQGVFRYDNVSSVWPLYPYGRCPTAADINTPDVPICVYDPLPIILLGILLGVAVIIIVVLLLYFMVDNGTRLHDA.

Residues Met-1–Ser-16 form the signal peptide. The interval Phe-7–Gly-127 is esterase domain 1. Topologically, residues Leu-17–Ile-392 are virion surface. Ser-40 acts as the Nucleophile in catalysis. Residues Cys-44 and Cys-65 are joined by a disulfide bond. Residues Asn-54, Asn-89, Asn-153, Asn-236, and Asn-301 are each glycosylated (N-linked (GlcNAc...) asparagine; by host). 3 disulfides stabilise this stretch: Cys-113–Cys-162, Cys-197–Cys-276, and Cys-205–Cys-249. The receptor binding stretch occupies residues Leu-128–Leu-266. The esterase domain 2 stretch occupies residues Leu-267 to Thr-379. Cys-307 and Cys-312 are joined by a disulfide. Asn-316 carries an N-linked (GlcNAc...) asparagine; by host glycan. Catalysis depends on charge relay system residues Asp-326 and His-329. Cys-347 and Cys-371 are oxidised to a cystine. Asn-358 carries an N-linked (GlcNAc...) asparagine; by host glycan. A helical membrane pass occupies residues Ile-393–Phe-413. The Intravirion portion of the chain corresponds to Met-414–Ala-424. A glycan (N-linked (GlcNAc...) asparagine; by host) is linked at Asn-417.

This sequence belongs to the influenza type C/coronaviruses hemagglutinin-esterase family. As to quaternary structure, homodimer; disulfide-linked. Forms a complex with the M protein in the pre-Golgi. Associates then with S-M complex to form a ternary complex S-M-HE. N-glycosylated in the RER. Post-translationally, N-glycosylated in the host RER.

It localises to the virion membrane. Its subcellular location is the host cell membrane. It carries out the reaction N-acetyl-9-O-acetylneuraminate + H2O = N-acetylneuraminate + acetate + H(+). The catalysed reaction is N-acetyl-4-O-acetylneuraminate + H2O = N-acetylneuraminate + acetate + H(+). Functionally, structural protein that makes short spikes at the surface of the virus. Contains receptor binding and receptor-destroying activities. Mediates de-O-acetylation of N-acetyl-4-O-acetylneuraminic acid, which is probably the receptor determinant recognized by the virus on the surface of erythrocytes and susceptible cells. This receptor-destroying activity is important for virus release as it probably helps preventing self-aggregation and ensures the efficient spread of the progeny virus from cell to cell. May serve as a secondary viral attachment protein for initiating infection, the spike protein being the major one. May become a target for both the humoral and the cellular branches of the immune system. This is Hemagglutinin-esterase from Bovine coronavirus (strain 98TXSF-110-ENT) (BCoV-ENT).